A 487-amino-acid polypeptide reads, in one-letter code: Serine/threonine-protein kinase 4 (487 aa).

M1 carries the N-acetylmethionine modification. The residue at position 3 (T3) is a Phosphothreonine. The region spanning 30 to 281 is the Protein kinase domain; the sequence is FDVLEKLGEG…ATQLLQHPFV (252 aa). ATP is bound by residues 36 to 44 and K59; that span reads LGEGSYGSV. D149 acts as the Proton acceptor in catalysis. Phosphothreonine; by autocatalysis is present on T183. Phosphoserine is present on S265. A coiled-coil region spans residues 290-310; the sequence is LRDLINEAMDVKLKRQESQQR. Residues 303–312 are compositionally biased toward basic and acidic residues; that stretch reads KRQESQQREV. The tract at residues 303–332 is disordered; the sequence is KRQESQQREVDQDDEENSEEDEMDSGTMVR. Residues 313–326 show a composition bias toward acidic residues; it reads DQDDEENSEEDEMD. Phosphoserine is present on S320. T340 and T367 each carry phosphothreonine. A Phosphothreonine; by PKB/AKT1 modification is found at T387. Phosphoserine occurs at positions 410 and 414. The residue at position 433 (Y433) is a Phosphotyrosine. In terms of domain architecture, SARAH spans 433-480; it reads YEFLKSWTVEDLQKRLLALDPMMEQEIEEIRQKYQSKRQPILDAIEAK.

It belongs to the protein kinase superfamily. STE Ser/Thr protein kinase family. STE20 subfamily. As to quaternary structure, homodimer; mediated via the coiled-coil region. Interacts with NORE1, which inhibits autoactivation. Interacts with and stabilizes SAV1. Interacts with RASSF1. Interacts with FOXO3. Interacts with RASSF2 (via SARAH domain). Interacts with AR, PKB/AKT1, TNNI3 and SIRT1. Interacts with DLG5 (via PDZ domain 3). Interacts with MARK3 and SCRIB in the presence of DLG5. Mg(2+) is required as a cofactor. Post-translationally, autophosphorylated on serine and threonine residues. Phosphorylation at Thr-387 by PKB/AKT1, leads to inhibition of its: kinase activity, nuclear translocation and autophosphorylation at Thr-183. It also diminishes its cleavage by caspases and its ability to phosphorylate FOXO3. Proteolytically cleaved by caspase-3 during apoptosis at Asp-326 and Asp-349 resulting in a 37 kDa or a 39 kDa subunit respectively. The 39 kDa subunit is further cleaved into the 37 kDa form. Proteolytic cleavage results in kinase activation and nuclear translocation of the truncated form (MST1/N). It is less likely that cleavage at Asp-349 is a prerequisite for activation as this site is not conserved in the murine ortholog.

The protein localises to the cytoplasm. It localises to the nucleus. It catalyses the reaction L-seryl-[protein] + ATP = O-phospho-L-seryl-[protein] + ADP + H(+). The catalysed reaction is L-threonyl-[protein] + ATP = O-phospho-L-threonyl-[protein] + ADP + H(+). Inhibited by the C-terminal non-catalytic region. Activated by caspase-cleavage. Full activation also requires homodimerization and autophosphorylation of Thr-183. Activated by RASSF1 which acts by preventing its dephosphorylation. Its function is as follows. Stress-activated, pro-apoptotic kinase which, following caspase-cleavage, enters the nucleus and induces chromatin condensation followed by internucleosomal DNA fragmentation. Key component of the Hippo signaling pathway which plays a pivotal role in organ size control and tumor suppression by restricting proliferation and promoting apoptosis. The core of this pathway is composed of a kinase cascade wherein STK3/MST2 and STK4/MST1, in complex with its regulatory protein SAV1, phosphorylates and activates LATS1/2 in complex with its regulatory protein MOB1, which in turn phosphorylates and inactivates YAP1 oncoprotein and WWTR1/TAZ. Phosphorylation of YAP1 by LATS2 inhibits its translocation into the nucleus to regulate cellular genes important for cell proliferation, cell death, and cell migration. STK3/MST2 and STK4/MST1 are required to repress proliferation of mature hepatocytes, to prevent activation of facultative adult liver stem cells (oval cells), and to inhibit tumor formation. Phosphorylates 'Ser-14' of histone H2B (H2BS14ph) during apoptosis. Phosphorylates FOXO3 upon oxidative stress, which results in its nuclear translocation and cell death initiation. Phosphorylates MOBKL1A, MOBKL1B and RASSF2. Phosphorylates TNNI3 (cardiac Tn-I) and alters its binding affinity to TNNC1 (cardiac Tn-C) and TNNT2 (cardiac Tn-T). Phosphorylates FOXO1 on 'Ser-212' and regulates its activation and stimulates transcription of PMAIP1 in a FOXO1-dependent manner. Phosphorylates SIRT1 and inhibits SIRT1-mediated p53/TP53 deacetylation, thereby promoting p53/TP53 dependent transcription and apoptosis upon DNA damage. Acts as an inhibitor of PKB/AKT1. Phosphorylates AR on 'Ser-650' and suppresses its activity by intersecting with PKB/AKT1 signaling and antagonizing formation of AR-chromatin complexes. The sequence is that of Serine/threonine-protein kinase 4 (STK4) from Chlorocebus aethiops (Green monkey).